A 263-amino-acid polypeptide reads, in one-letter code: Nitrogenase iron protein 2 (263 aa).

9-16 lines the ATP pocket; sequence GKGGIGKS. Cys92 provides a ligand contact to [4Fe-4S] cluster. At Arg95 the chain carries ADP-ribosylarginine; by dinitrogenase reductase ADP-ribosyltransferase. Cys127 provides a ligand contact to [4Fe-4S] cluster.

This sequence belongs to the NifH/BchL/ChlL family. As to quaternary structure, homodimer. It depends on [4Fe-4S] cluster as a cofactor. In terms of processing, the reversible ADP-ribosylation of Arg-95 inactivates the nitrogenase reductase and regulates nitrogenase activity.

It catalyses the reaction N2 + 8 reduced [2Fe-2S]-[ferredoxin] + 16 ATP + 16 H2O = H2 + 8 oxidized [2Fe-2S]-[ferredoxin] + 2 NH4(+) + 16 ADP + 16 phosphate + 6 H(+). In terms of biological role, the key enzymatic reactions in nitrogen fixation are catalyzed by the nitrogenase complex, which has 2 components: the iron protein and the molybdenum-iron protein. This chain is Nitrogenase iron protein 2 (nifH2), found in Methanobacterium ivanovii.